Here is a 102-residue protein sequence, read N- to C-terminus: CRISPR-associated endoribonuclease Cas2 1 (102 aa).

Asp17 is a Mg(2+) binding site.

It belongs to the CRISPR-associated endoribonuclease Cas2 protein family. In terms of assembly, homodimer, forms a heterotetramer with a Cas1 homodimer. It depends on Mg(2+) as a cofactor.

Its function is as follows. CRISPR (clustered regularly interspaced short palindromic repeat), is an adaptive immune system that provides protection against mobile genetic elements (viruses, transposable elements and conjugative plasmids). CRISPR clusters contain sequences complementary to antecedent mobile elements and target invading nucleic acids. CRISPR clusters are transcribed and processed into CRISPR RNA (crRNA). Functions as a ssRNA-specific endoribonuclease. Involved in the integration of spacer DNA into the CRISPR cassette. This chain is CRISPR-associated endoribonuclease Cas2 1, found in Rhodospirillum rubrum (strain ATCC 11170 / ATH 1.1.1 / DSM 467 / LMG 4362 / NCIMB 8255 / S1).